Reading from the N-terminus, the 145-residue chain is Hemoglobin subunit beta (145 aa).

Residues 1-145 (MLTAEEKAAV…VANALAHRYH (145 aa)) enclose the Globin domain. Phosphothreonine is present on threonine 11. Serine 43 bears the Phosphoserine mark. An N6-acetyllysine modification is found at lysine 58. Histidine 62 is a heme b binding site. The residue at position 81 (lysine 81) is an N6-acetyllysine. Histidine 91 serves as a coordination point for heme b. Cysteine 92 bears the S-nitrosocysteine mark.

The protein belongs to the globin family. In terms of assembly, heterotetramer of two alpha chains and two beta chains. Red blood cells.

Involved in oxygen transport from the lung to the various peripheral tissues. The chain is Hemoglobin subunit beta (HBB) from Tragelaphus strepsiceros (Greater kudu).